The following is a 59-amino-acid chain: Large ribosomal subunit protein uL30 (59 aa).

The protein belongs to the universal ribosomal protein uL30 family. In terms of assembly, part of the 50S ribosomal subunit.

This chain is Large ribosomal subunit protein uL30, found in Streptococcus agalactiae serotype Ia (strain ATCC 27591 / A909 / CDC SS700).